The primary structure comprises 325 residues: Transcription initiation factor IIB (325 aa).

The segment at 19-52 (NKLWCMVCRIQDPDIIEDYAKGDLICRGCGVVVG) adopts a TFIIB-type zinc-finger fold. Zn(2+)-binding residues include cysteine 23, cysteine 26, cysteine 44, and cysteine 47. 2 tandem repeats follow at residues 131–207 (MADH…IMKE) and 227–303 (FCST…DLYA).

Belongs to the TFIIB family.

The protein resides in the nucleus. Its function is as follows. General transcription factor that plays a role in transcription initiation by RNA polymerase II (Pol II). Involved in the pre-initiation complex (PIC) formation and Pol II recruitment at promoter DNA. The polypeptide is Transcription initiation factor IIB (gtf2b) (Dictyostelium discoideum (Social amoeba)).